A 392-amino-acid chain; its full sequence is Serine protease ea (392 aa).

Residues 1-19 (MLKPSIICLFLGILAKSSA) form the signal peptide. The propeptide at 20 to 127 (GQFYFPNEAA…GQCGNILSNR (108 aa)) is activation peptide. Residues 36 to 89 (RCITPNRERALCIHLEDCKYLYGLLTTTPLRDTDRLYLSRSQCGYTNGKVLICC) enclose the Clip domain. Intrachain disulfides connect Cys-37/Cys-88, Cys-47/Cys-78, and Cys-53/Cys-89. N-linked (GlcNAc...) asparagine glycosylation occurs at Asn-107. 5 disulfide bridges follow: Cys-120/Cys-260, Cys-158/Cys-174, Cys-202/Cys-212, Cys-307/Cys-324, and Cys-334/Cys-367. Residues 128–391 (IYGGMKTKID…YVDWIQNTIE (264 aa)) enclose the Peptidase S1 domain. His-173 serves as the catalytic Charge relay system. 4 residues coordinate Ca(2+): Glu-193, Asp-195, Thr-198, and Asp-201. Asp-240 acts as the Charge relay system in catalysis. Residue Ser-338 is the Charge relay system of the active site.

Belongs to the peptidase S1 family. CLIP subfamily. In terms of assembly, interacts with Spn27A; the two proteins are covalently linked leading to inhibition of ea catalytic activity. Interacts (via Peptidase domain) with snk (via N-terminal prodomain); leads to proteolytic activation of ea by snk. Sulfation of a vitelline membrane component by pip is required for proteolytic cleavage of ea by snk but not for the interaction of ea with snk. In terms of processing, proteolytically cleaved by snk. Activation peptide and active catalytic domain remain associated by a disulfide bond. Processed ea/easter is present in extremely low amounts in the early embryo as it is rapidly converted into a high molecular mass complex made up of ea covalently bound to the serpin Spn27A. Zymogen activation is also controlled by a negative feedback loop from Dorsal.

It localises to the secreted. Activated proteolytically by snk; activation requires both activation of the ndl-gd-snk protease cascade and sulfation of a vitelline membrane component by pip. Inhibited by binding of the serpin Spn27A. Component of the extracellular signaling pathway that establishes the dorsal-ventral pathway of the embryo. A protease cascade involving ndl, gd, snk and ea results in activation of the spz Toll receptor ligand; acts downstream of ndl, gd and snk and is required for proteolytic processing of spz. Activation of ea requires both activation of the ndl-gd-snk protease cascade and sulfation of a vitelline membrane component by pip. Localized activation of the Toll receptor in the ventral region of the embryo defines cell identities along the dorsal-ventral continuum. The polypeptide is Serine protease ea (Drosophila melanogaster (Fruit fly)).